We begin with the raw amino-acid sequence, 391 residues long: Beta sliding clamp (391 aa).

This sequence belongs to the beta sliding clamp family. As to quaternary structure, forms a ring-shaped head-to-tail homodimer around DNA which binds and tethers DNA polymerases and other proteins to the DNA. The DNA replisome complex has a single clamp-loading complex (3 tau and 1 each of delta, delta', psi and chi subunits) which binds 3 Pol III cores (1 core on the leading strand and 2 on the lagging strand) each with a beta sliding clamp dimer. Additional proteins in the replisome are other copies of gamma, psi and chi, Ssb, DNA helicase and RNA primase.

It localises to the cytoplasm. Confers DNA tethering and processivity to DNA polymerases and other proteins. Acts as a clamp, forming a ring around DNA (a reaction catalyzed by the clamp-loading complex) which diffuses in an ATP-independent manner freely and bidirectionally along dsDNA. Initially characterized for its ability to contact the catalytic subunit of DNA polymerase III (Pol III), a complex, multichain enzyme responsible for most of the replicative synthesis in bacteria; Pol III exhibits 3'-5' exonuclease proofreading activity. The beta chain is required for initiation of replication as well as for processivity of DNA replication. The sequence is that of Beta sliding clamp (dnaN) from Synechocystis sp. (strain ATCC 27184 / PCC 6803 / Kazusa).